The following is a 343-amino-acid chain: Phospholipid phosphatase-related protein type 2 (343 aa).

3 helical membrane-spanning segments follow: residues 12–32 (FSII…VVLL), 72–92 (ALIY…GELA), and 129–149 (FLGV…AGQV). N165 carries N-linked (GlcNAc...) asparagine glycosylation. The next 3 membrane-spanning stretches (helical) occupy residues 210–230 (AALC…VFRV), 239–259 (SLCL…VAEY), and 266–286 (VLAG…CVVH). The disordered stretch occupies residues 291–343 (RPHSGRRLSPWEDLSQAPTMDSPLEKNPRPAGRIRHRHGSPHPSRRTVPAVAT). A phosphoserine mark is found at S299 and S312. Basic residues predominate over residues 322–335 (GRIRHRHGSPHPSR).

This sequence belongs to the PA-phosphatase related phosphoesterase family.

Its subcellular location is the membrane. This Mus musculus (Mouse) protein is Phospholipid phosphatase-related protein type 2.